Here is a 143-residue protein sequence, read N- to C-terminus: Endoribonuclease YbeY (143 aa).

Residues His111, His115, and Asp121 each contribute to the Zn(2+) site.

Belongs to the endoribonuclease YbeY family. Requires Zn(2+) as cofactor.

The protein resides in the cytoplasm. Its function is as follows. Single strand-specific metallo-endoribonuclease involved in late-stage 70S ribosome quality control and in maturation of the 3' terminus of the 16S rRNA. This Cytophaga hutchinsonii (strain ATCC 33406 / DSM 1761 / CIP 103989 / NBRC 15051 / NCIMB 9469 / D465) protein is Endoribonuclease YbeY.